The sequence spans 152 residues: D-aminoacyl-tRNA deacylase (152 aa).

A Gly-cisPro motif, important for rejection of L-amino acids motif is present at residues 142–143; that stretch reads GP.

The protein belongs to the DTD family. Homodimer.

It localises to the cytoplasm. The catalysed reaction is glycyl-tRNA(Ala) + H2O = tRNA(Ala) + glycine + H(+). It carries out the reaction a D-aminoacyl-tRNA + H2O = a tRNA + a D-alpha-amino acid + H(+). In terms of biological role, an aminoacyl-tRNA editing enzyme that deacylates mischarged D-aminoacyl-tRNAs. Also deacylates mischarged glycyl-tRNA(Ala), protecting cells against glycine mischarging by AlaRS. Acts via tRNA-based rather than protein-based catalysis; rejects L-amino acids rather than detecting D-amino acids in the active site. By recycling D-aminoacyl-tRNA to D-amino acids and free tRNA molecules, this enzyme counteracts the toxicity associated with the formation of D-aminoacyl-tRNA entities in vivo and helps enforce protein L-homochirality. In Burkholderia multivorans (strain ATCC 17616 / 249), this protein is D-aminoacyl-tRNA deacylase.